Reading from the N-terminus, the 332-residue chain is Flotillin-like protein FloA (332 aa).

Helical transmembrane passes span L6–V26 and V28–G48.

The protein belongs to the flotillin-like FloA family. Homooligomerizes.

It is found in the cell membrane. The protein resides in the membrane raft. Its function is as follows. Found in functional membrane microdomains (FMM) that may be equivalent to eukaryotic membrane rafts. FMMs are highly dynamic and increase in number as cells age. Flotillins are thought to be important factors in membrane fluidity. This Symbiobacterium thermophilum (strain DSM 24528 / JCM 14929 / IAM 14863 / T) protein is Flotillin-like protein FloA.